Consider the following 88-residue polypeptide: CRISPR-associated endoribonuclease Cas2 3 (88 aa).

Residue Asp-9 participates in Mg(2+) binding.

This sequence belongs to the CRISPR-associated endoribonuclease Cas2 protein family. Homodimer, forms a heterotetramer with a Cas1 homodimer. Requires Mg(2+) as cofactor.

Its function is as follows. CRISPR (clustered regularly interspaced short palindromic repeat), is an adaptive immune system that provides protection against mobile genetic elements (viruses, transposable elements and conjugative plasmids). CRISPR clusters contain sequences complementary to antecedent mobile elements and target invading nucleic acids. CRISPR clusters are transcribed and processed into CRISPR RNA (crRNA). Functions as a ssRNA-specific endoribonuclease. Involved in the integration of spacer DNA into the CRISPR cassette. This Thermodesulfovibrio yellowstonii (strain ATCC 51303 / DSM 11347 / YP87) protein is CRISPR-associated endoribonuclease Cas2 3.